Consider the following 306-residue polypeptide: tRNA dimethylallyltransferase (306 aa).

9–16 (GPTAIGKT) contributes to the ATP binding site. Position 11–16 (11–16 (TAIGKT)) interacts with substrate. Residues 34-37 (DSMQ) form an interaction with substrate tRNA region.

Belongs to the IPP transferase family. Monomer. Requires Mg(2+) as cofactor.

It carries out the reaction adenosine(37) in tRNA + dimethylallyl diphosphate = N(6)-dimethylallyladenosine(37) in tRNA + diphosphate. Functionally, catalyzes the transfer of a dimethylallyl group onto the adenine at position 37 in tRNAs that read codons beginning with uridine, leading to the formation of N6-(dimethylallyl)adenosine (i(6)A). The chain is tRNA dimethylallyltransferase from Lactobacillus acidophilus (strain ATCC 700396 / NCK56 / N2 / NCFM).